The chain runs to 568 residues: CDK5 and ABL1 enzyme substrate 1 (568 aa).

Residues 1-31 (MAAATATAGTAACSSSSSSRGGSTDAAATSG) are compositionally biased toward low complexity. Disordered stretches follow at residues 1–94 (MAAA…PGAR) and 130–169 (PSLV…QEEL). Residues 1-98 (MAAATATAGT…TKPGARARLS (98 aa)) form an interaction with TDRD7 region. Over residues 33–45 (QPPPPPPATAPPE) the composition is skewed to pro residues. Over residues 46 to 56 (PLRKPRMDPRR) the composition is skewed to basic and acidic residues. Residues 140-427 (PSQPPRSAPA…TTVIDYVKPS (288 aa)) are interaction with CDK3. At Ser248 the chain carries Phosphoserine. Ser274 is modified (phosphoserine; by CDK2 and CDK3). Phosphothreonine is present on Thr350.

Belongs to the cyclin family. Found in a complex with p53/TP53. Found in a number of complexes with CDK2, CDK3, CDK5, ABL1, TDRD7, CDK17, CCNA1, CCNE1 and TP73. Interacts with CDK2, CDK3, CDK5, ABL1 and TDRD7. Phosphorylated on Ser-274 by CCNE1/CDK3. Phosphorylated on serine/threonine residues by CDK5 and on tyrosine residues by ABL1. Also phosphorylated in vitro by CCNA1/CDK2, CCNE1/CDK2, CCNA1/CDK3 and CCNE1/CDK3. In terms of tissue distribution, ubiquitous. Expressed in postnatal day 1 (P1), in postmitotic neurons of the subplate, cortex (V/VI) and marginal zone; in postnatal day 7 (P7), in all layers of the cerebral cortex and in the CA1 and CA2 regions of the hippocampus (at protein level). Highly expressed in brain, kidney, liver and lung.

Its subcellular location is the nucleus. It is found in the cytoplasm. The protein localises to the cell projection. The protein resides in the growth cone. Cyclin-dependent kinase binding protein. Enhances cyclin-dependent kinase tyrosine phosphorylation by nonreceptor tyrosine kinases, such as that of CDK5 by activated ABL1, which leads to increased CDK5 activity and is critical for neuronal development, and that of CDK2 by WEE1, which leads to decreased CDK2 activity and growth inhibition. Positively affects neuronal outgrowth. Plays a role as a regulator for p53/p73-induced cell death. The sequence is that of CDK5 and ABL1 enzyme substrate 1 (Cables1) from Mus musculus (Mouse).